The following is a 326-amino-acid chain: Pyruvate dehydrogenase E1 component subunit beta (326 aa).

Glutamate 59 is a binding site for thiamine diphosphate.

As to quaternary structure, heterodimer of an alpha and a beta chain. Thiamine diphosphate is required as a cofactor.

The catalysed reaction is N(6)-[(R)-lipoyl]-L-lysyl-[protein] + pyruvate + H(+) = N(6)-[(R)-S(8)-acetyldihydrolipoyl]-L-lysyl-[protein] + CO2. Functionally, the pyruvate dehydrogenase complex catalyzes the overall conversion of pyruvate to acetyl-CoA and CO(2). It contains multiple copies of three enzymatic components: pyruvate dehydrogenase (E1), dihydrolipoamide acetyltransferase (E2) and lipoamide dehydrogenase (E3). In Rickettsia felis (strain ATCC VR-1525 / URRWXCal2) (Rickettsia azadi), this protein is Pyruvate dehydrogenase E1 component subunit beta (pdhB).